The sequence spans 1423 residues: MKDLVKFLKAQSKSNDDFDVIKIGLASPDKIRSWSFGEVKKPETINYRTFKPERDGLFCARIFGPVKDYECLCGKYKRLKHRGVICEKCGVEVTQTKVRRDRMGHIELACPVAHIWFLKSLPSRIGLILDMPLRDIERVLYFESYVVTEPGMTDLEKNQLLTEEQFLDAEERWGDEFEAKMGAEGIQALLRDMDLEHQCEMMREELQETNSETKRKKITKRLKLLEAFQQSGNKPEWMVMTVLPVLPPDLRPLVPLDGGRFATSDLNDLYRRVINRNNRLKRLLDLVAPDIIVRNEKRMLQKSVDALLDNGRRGRAITGSNKRPLKSLADMIKGKQGRFRQNLLGKRVDYSGRSVITVGPYLHLHQCGLPKKMALELFRPFIYSKLESRGIASTIKAAKKMVEREEPIVWDILAEVIREHPILLNRAPTLHRLGIQAFEPILIEGKAIQLHPLVCAAFNADFDGDQMAVHVPLTLEAQLEARALMMSTNNVLSPASGDPIIVPSQDVVLGLYYMTREKVNAKGEGMYFLDPREAEKAYRTGQAELHARVKVRITEHVKNEAGELVAETKLLDTTIGRAILWMIAPKGMPFKVFNQTLGKKAISKLINESYRRLGLKESVILADQIMYTGFAYAARSGASVGIDDMVIPAQKHEIIRAAEAEVAEIQEQFNSGLVTAGERYNKVIDIWAAANERVAKAMMENLSTEEVINREGNPEKQASFNSIFMMADSGARGSAAQIRQLAGMRGLMARPDGSIIETPITANFREGLNVLQYFISTHGARKGLADTALKTANSGYLTRRLVDVAQDLVITEDDCGTHEGIVMTPLIEGGDVKEALRDRVLGRVVAEDVLKPGTEEVLIPRNTLIDEKWCDVIDAESVDVIKVRSVVTCNTDFGVCAKCYGRDLARGHLINQGEAVGVIAAQSIGEPGTQLTMRTFHIGGAASAAAKESSIQVKNAGTIKLTNAKFVTNKEGKIVLTSRNTELTVIDTFGRTKENYKVPYGAVLSKNDGAEVAVGEVVANWDPHTMPVISEVSGRIQFSDIVDGLTVTRQTDELTGLSSIVVQDVGERATAGKDLRPALRLVDAQGNDILIPGTDVAAQYFLPGKAIVTLDDGAEIEVGEALARIPQESVGTKDITGGLPRVADLFEARKPKEPAILAEISGIVSFGKETKGKRRLVITPAEGEAFEEMIPKWRQLNVFEGEMVQRGDVISDGAETPHDILRLRGVHAVTDYIVNEVQEVYRLQGVKINDKHIEVIVRQMLRKAVITNAYDSEFLEGEQVEVSRVKIANRKRAEEGKPLVEFERELLGITKASLATESFISAASFQETTRVLTEAAVAGKRDELRGLKENVIVGRLIPAGTGFAYHQARAKKRSQPEQAVAFEAPVAKANGFATDADIEAEFEFVADDATQSLAALLNAGDEE.

Cys-71, Cys-73, Cys-86, and Cys-89 together coordinate Zn(2+). Mg(2+)-binding residues include Asp-461, Asp-463, and Asp-465. 4 residues coordinate Zn(2+): Cys-815, Cys-889, Cys-896, and Cys-899.

It belongs to the RNA polymerase beta' chain family. As to quaternary structure, the RNAP catalytic core consists of 2 alpha, 1 beta, 1 beta' and 1 omega subunit. When a sigma factor is associated with the core the holoenzyme is formed, which can initiate transcription. Requires Mg(2+) as cofactor. Zn(2+) is required as a cofactor.

It carries out the reaction RNA(n) + a ribonucleoside 5'-triphosphate = RNA(n+1) + diphosphate. Functionally, DNA-dependent RNA polymerase catalyzes the transcription of DNA into RNA using the four ribonucleoside triphosphates as substrates. The chain is DNA-directed RNA polymerase subunit beta' from Actinobacillus pleuropneumoniae serotype 3 (strain JL03).